Reading from the N-terminus, the 375-residue chain is Membrane progesterone receptor epsilon (375 aa).

Residues 1-39 (MPRRLQQRGAGVKGPPASTSRRSHPASASAPRSPPAATT) are disordered. Over 1–84 (MPRRLQQRGA…VLKPTNETLN (84 aa)) the chain is Cytoplasmic. Residues 15-39 (PPASTSRRSHPASASAPRSPPAATT) are compositionally biased toward low complexity. Residues 85–105 (FWTHFIPLLLFLSKFCRLFFL) traverse the membrane as a helical segment. At 106–114 (GGSDVPFHH) the chain is on the extracellular side. A helical membrane pass occupies residues 115 to 135 (PWLLPLWCYASGVLLTFAMSC). At 136–160 (TAHVFSCLSLRLRAAFFYLDYASIS) the chain is on the cytoplasmic side. A helical membrane pass occupies residues 161 to 181 (YYGFGSTVAYYYYLLPSLSLL). Over 182 to 203 (DARVMTPYVQQRLGWHVDCTRL) the chain is Extracellular. Residues 204–224 (IAVYRALVLPVAFVLAVACTV) traverse the membrane as a helical segment. At 225–241 (ACCKSRTDWCSYPFALR) the chain is on the cytoplasmic side. A helical transmembrane segment spans residues 242-262 (TFVFVMPLSMACPIMLESWLF). The Extracellular segment spans residues 263–299 (DLRGENPTLFVHFYRRYFWLVVAAFFNVSKIPERIQP). A helical transmembrane segment spans residues 300–320 (GLFDIIGHSHQLFHIFTFLSI). The Cytoplasmic portion of the chain corresponds to 321-341 (YDQVYYVEEGLRQFLQAPPAA). Residues 342–362 (PTFSGTVGYMLLLVVCLGLVI) form a helical membrane-spanning segment. The Extracellular portion of the chain corresponds to 363–375 (RKFLNSTEFCSKK).

This sequence belongs to the ADIPOR family. In terms of assembly, homodimer.

It localises to the cell membrane. Plasma membrane progesterone (P4) receptor coupled to G proteins. Seems to act through a G(s) mediated pathway. May be involved in regulating rapid P4 signaling in the nervous system. Also binds dehydroepiandrosterone (DHEA), pregnanolone, pregnenolone and allopregnanolone. The polypeptide is Membrane progesterone receptor epsilon (Mus musculus (Mouse)).